A 152-amino-acid polypeptide reads, in one-letter code: Ribosome maturation factor RimP (152 aa).

The protein belongs to the RimP family.

The protein resides in the cytoplasm. Required for maturation of 30S ribosomal subunits. The polypeptide is Ribosome maturation factor RimP (Paraburkholderia phymatum (strain DSM 17167 / CIP 108236 / LMG 21445 / STM815) (Burkholderia phymatum)).